The following is a 166-amino-acid chain: Ureidoglycolate lyase (166 aa).

It belongs to the ureidoglycolate lyase family. In terms of assembly, homodimer. The cofactor is Ni(2+).

The enzyme catalyses (S)-ureidoglycolate = urea + glyoxylate. The protein operates within nitrogen metabolism; (S)-allantoin degradation. Functionally, catalyzes the catabolism of the allantoin degradation intermediate (S)-ureidoglycolate, generating urea and glyoxylate. Involved in the utilization of allantoin as nitrogen source. The sequence is that of Ureidoglycolate lyase from Rhizobium etli (strain CIAT 652).